Here is a 248-residue protein sequence, read N- to C-terminus: 2,3-bisphosphoglycerate-dependent phosphoglycerate mutase (248 aa).

Residues 8–15, 21–22, Arg-60, 87–90, Lys-98, 114–115, and 183–184 contribute to the substrate site; these read RHGESTWN, TG, ERHY, RR, and GN. His-9 functions as the Tele-phosphohistidine intermediate in the catalytic mechanism. The active-site Proton donor/acceptor is Glu-87.

Belongs to the phosphoglycerate mutase family. BPG-dependent PGAM subfamily.

It carries out the reaction (2R)-2-phosphoglycerate = (2R)-3-phosphoglycerate. The protein operates within carbohydrate degradation; glycolysis; pyruvate from D-glyceraldehyde 3-phosphate: step 3/5. Its function is as follows. Catalyzes the interconversion of 2-phosphoglycerate and 3-phosphoglycerate. This Solibacter usitatus (strain Ellin6076) protein is 2,3-bisphosphoglycerate-dependent phosphoglycerate mutase.